Consider the following 38-residue polypeptide: Photosystem I reaction center subunit IX (38 aa).

A helical transmembrane segment spans residues 4 to 24 (FLTTAPVFSAIWFTLTAGIMI).

This sequence belongs to the PsaJ family.

It is found in the plastid. The protein localises to the organellar chromatophore thylakoid membrane. Its function is as follows. May help in the organization of the PsaE and PsaF subunits. This is Photosystem I reaction center subunit IX from Paulinella chromatophora.